A 173-amino-acid chain; its full sequence is Dual-action ribosomal maturation protein DarP (173 aa).

Belongs to the DarP family.

The protein resides in the cytoplasm. In terms of biological role, member of a network of 50S ribosomal subunit biogenesis factors which assembles along the 30S-50S interface, preventing incorrect 23S rRNA structures from forming. Promotes peptidyl transferase center (PTC) maturation. This is Dual-action ribosomal maturation protein DarP from Pseudomonas entomophila (strain L48).